The chain runs to 336 residues: Coproporphyrin III ferrochelatase (336 aa).

The Fe-coproporphyrin III site is built by Ser-52 and Tyr-116. Residues His-176 and Glu-259 each contribute to the Fe(2+) site.

Belongs to the ferrochelatase family.

The protein resides in the cytoplasm. It carries out the reaction Fe-coproporphyrin III + 2 H(+) = coproporphyrin III + Fe(2+). The protein operates within porphyrin-containing compound metabolism; protoheme biosynthesis. Functionally, involved in coproporphyrin-dependent heme b biosynthesis. Catalyzes the insertion of ferrous iron into coproporphyrin III to form Fe-coproporphyrin III. The sequence is that of Coproporphyrin III ferrochelatase from Mycobacterium leprae (strain Br4923).